We begin with the raw amino-acid sequence, 326 residues long: 5,10-methylenetetrahydromethanopterin reductase (326 aa).

The protein belongs to the mer family.

It is found in the cytoplasm. It catalyses the reaction 5-methyl-5,6,7,8-tetrahydromethanopterin + oxidized coenzyme F420-(gamma-L-Glu)(n) + H(+) = 5,10-methylenetetrahydromethanopterin + reduced coenzyme F420-(gamma-L-Glu)(n). The protein operates within one-carbon metabolism; methanogenesis from CO(2); methyl-coenzyme M from 5,10-methylene-5,6,7,8-tetrahydromethanopterin: step 1/2. Functionally, catalyzes the reversible reduction of methylene-H(4)MPT to methyl-H(4)MPT. This is 5,10-methylenetetrahydromethanopterin reductase from Methanolobus tindarius.